A 499-amino-acid chain; its full sequence is MNHFPWLTIIVLFPISAGLVIPFLPSTGNKIIRWYTLGVCLLEFLLITYIFCYHYQFNDHLIQLKEDYNWISFINFHWRLGIDGFSIGLILLTGFITTLATLAAWPVTRNPRLFYFLMLAMYSGQIGLFASQDILLFFFMWELELLPVYLLLAMWGGKRRLYAATKFILYTAAGSLFILIGGLIMAFYNSNEFTFDFQFLINKKYPLELEIIIYLSFLIAYAVKLPIIPFHTWLPDTHGEAHYSTCMLLAGILLKMGAYGLIRINMELLPHAHSFFAPWLVIVGAIQIVYAALTSLSQRNLKRRIAYSSVSHMGFVLIGIGSITNLGLNGAILQMISHGLIGASLFFLAGISYDRTRTLVLDQMGGIGNSMPKIFTLFTSCSMASLALPGMSGFIAELMIFLGVIDNPNYSSLFKIIIIIIQGIGIILTPIYLLSMLRQMFYGYKFSNTLEPYFMDAGPREIFILICLFFPIISIGIYPNFVLSIWNSKVNFLLSNNFF.

The next 14 helical transmembrane spans lie at 4–24 (FPWL…IPFL), 31–51 (IIRW…TYIF), 87–107 (IGLI…AWPV), 113–133 (LFYF…ASQD), 134–154 (ILLF…LLAM), 167–187 (FILY…IMAF), 211–231 (IIIY…IPFH), 242–262 (HYST…YGLI), 274–294 (SFFA…AALT), 310–330 (VSHM…GLNG), 331–351 (AILQ…LAGI), 385–405 (SLAL…LGVI), 416–436 (IIII…LLSM), and 462–482 (IFIL…PNFV).

This sequence belongs to the complex I subunit 4 family.

It is found in the plastid. It localises to the chloroplast thylakoid membrane. It carries out the reaction a plastoquinone + NADH + (n+1) H(+)(in) = a plastoquinol + NAD(+) + n H(+)(out). The catalysed reaction is a plastoquinone + NADPH + (n+1) H(+)(in) = a plastoquinol + NADP(+) + n H(+)(out). This is NAD(P)H-quinone oxidoreductase chain 4, chloroplastic (ndhD) from Marchantia polymorpha (Common liverwort).